We begin with the raw amino-acid sequence, 150 residues long: MGMIHIENRQKNQKIAVETLEKVAQRILNDSECPDAELSLLIVDDIEIQQINRDYLQRDKPTNVISFAMQEGEDVGLHPGLLGDVIISADTAARDAREADLPFESELYFLLLHGVLHLLGYDHERGTEEDARRMEAREAELFARIREEFL.

Residues H113, H117, and H123 each coordinate Zn(2+).

The protein belongs to the endoribonuclease YbeY family. Zn(2+) serves as cofactor.

The protein localises to the cytoplasm. Its function is as follows. Single strand-specific metallo-endoribonuclease involved in late-stage 70S ribosome quality control and in maturation of the 3' terminus of the 16S rRNA. The polypeptide is Endoribonuclease YbeY (Syntrophotalea carbinolica (strain DSM 2380 / NBRC 103641 / GraBd1) (Pelobacter carbinolicus)).